We begin with the raw amino-acid sequence, 126 residues long: Small ribosomal subunit protein uS12 (126 aa).

The tract at residues 1 to 26 (MPTINQLVRKGRASETTKSKSPALQD) is disordered. A 3-methylthioaspartic acid modification is found at Asp89. A disordered region spans residues 103–126 (DTQGVKDRKQARSKYGAKRAKAGK). Basic residues predominate over residues 113–126 (ARSKYGAKRAKAGK).

This sequence belongs to the universal ribosomal protein uS12 family. Part of the 30S ribosomal subunit. Contacts proteins S8 and S17. May interact with IF1 in the 30S initiation complex.

Its function is as follows. With S4 and S5 plays an important role in translational accuracy. Functionally, interacts with and stabilizes bases of the 16S rRNA that are involved in tRNA selection in the A site and with the mRNA backbone. Located at the interface of the 30S and 50S subunits, it traverses the body of the 30S subunit contacting proteins on the other side and probably holding the rRNA structure together. The combined cluster of proteins S8, S12 and S17 appears to hold together the shoulder and platform of the 30S subunit. The sequence is that of Small ribosomal subunit protein uS12 from Paraburkholderia xenovorans (strain LB400).